We begin with the raw amino-acid sequence, 529 residues long: Peptide chain release factor 3 (529 aa).

The tr-type G domain maps to 11–280 (SKRRTFAIIS…GLTDWAPAPL (270 aa)). Residues 20–27 (SHPDAGKT), 88–92 (DTPGH), and 142–145 (NKLD) each bind GTP.

This sequence belongs to the TRAFAC class translation factor GTPase superfamily. Classic translation factor GTPase family. PrfC subfamily.

Its subcellular location is the cytoplasm. Increases the formation of ribosomal termination complexes and stimulates activities of RF-1 and RF-2. It binds guanine nucleotides and has strong preference for UGA stop codons. It may interact directly with the ribosome. The stimulation of RF-1 and RF-2 is significantly reduced by GTP and GDP, but not by GMP. This chain is Peptide chain release factor 3, found in Vibrio vulnificus (strain CMCP6).